The sequence spans 359 residues: DNA integrity scanning protein DisA (359 aa).

A DAC domain is found at 10–148 (ELDLLDIVQF…GNRRYTLKDI (139 aa)). Residues G77, L95, and 108 to 112 (MRHRT) each bind ATP.

It belongs to the DisA family. Homooctamer. The cofactor is Mg(2+).

It carries out the reaction 2 ATP = 3',3'-c-di-AMP + 2 diphosphate. Its function is as follows. Participates in a DNA-damage check-point that is active prior to asymmetric division when DNA is damaged. DisA forms globular foci that rapidly scan along the chromosomes during sporulation, searching for lesions. When a lesion is present, DisA pauses at the lesion site. This triggers a cellular response that culminates in a temporary block in sporulation initiation. In terms of biological role, also has diadenylate cyclase activity, catalyzing the condensation of 2 ATP molecules into cyclic di-AMP (c-di-AMP). c-di-AMP acts as a signaling molecule that couples DNA integrity with progression of sporulation. The rise in c-di-AMP level generated by DisA while scanning the chromosome, operates as a positive signal that advances sporulation; upon encountering a lesion, the DisA focus arrests at the damaged site and halts c-di-AMP synthesis. This chain is DNA integrity scanning protein DisA, found in Bacillus pumilus (strain SAFR-032).